The sequence spans 191 residues: Adenylate kinase (191 aa).

10-15 (GAGKGT) lines the ATP pocket. The tract at residues 30 to 59 (STGDIFRANVTEGTPLGVEAKRYMDAGEYV) is NMP. Residues Thr-31, Arg-36, 57–59 (EYV), 85–88 (GYPR), and Gln-92 each bind AMP. Positions 126–136 (QRAQVEGRADD) are LID. ATP is bound at residue Arg-127. The AMP site is built by Arg-133 and Arg-144. Gly-172 serves as a coordination point for ATP.

This sequence belongs to the adenylate kinase family. As to quaternary structure, monomer.

It localises to the cytoplasm. It carries out the reaction AMP + ATP = 2 ADP. It participates in purine metabolism; AMP biosynthesis via salvage pathway; AMP from ADP: step 1/1. In terms of biological role, catalyzes the reversible transfer of the terminal phosphate group between ATP and AMP. Plays an important role in cellular energy homeostasis and in adenine nucleotide metabolism. The sequence is that of Adenylate kinase from Nocardioides sp. (strain ATCC BAA-499 / JS614).